Consider the following 398-residue polypeptide: Proteasome-activating nucleotidase (398 aa).

Residues 18–59 (IMYLKKRIRQLELQVRTLEADKERLERELSRLRMEMSRLRQP) adopt a coiled-coil conformation. ATP contacts are provided by residues 183 to 188 (GCGKTL) and His322. Residues 396–398 (MYG) are docks into pockets in the proteasome alpha-ring to cause gate opening.

This sequence belongs to the AAA ATPase family. As to quaternary structure, homohexamer. The hexameric complex has a two-ring architecture resembling a top hat that caps the 20S proteasome core at one or both ends. Upon ATP-binding, the C-terminus of PAN interacts with the alpha-rings of the proteasome core by binding to the intersubunit pockets.

The protein localises to the cytoplasm. Functionally, ATPase which is responsible for recognizing, binding, unfolding and translocation of substrate proteins into the archaeal 20S proteasome core particle. Is essential for opening the gate of the 20S proteasome via an interaction with its C-terminus, thereby allowing substrate entry and access to the site of proteolysis. Thus, the C-termini of the proteasomal ATPase function like a 'key in a lock' to induce gate opening and therefore regulate proteolysis. Unfolding activity requires energy from ATP hydrolysis, whereas ATP binding alone promotes ATPase-20S proteasome association which triggers gate opening, and supports translocation of unfolded substrates. This Thermococcus onnurineus (strain NA1) protein is Proteasome-activating nucleotidase.